The following is a 350-amino-acid chain: Small ribosomal subunit biogenesis GTPase RsgA (350 aa).

Residues 1–30 (MSKRKLTQNQQRRIQSNNAKTLHRHQHRHK) are disordered. Residues 7 to 20 (TQNQQRRIQSNNAK) show a composition bias toward polar residues. Residues 21 to 30 (TLHRHQHRHK) are compositionally biased toward basic residues. Residues 106–274 (HNQIVRPDYY…LIDSPGIREF (169 aa)) form the CP-type G domain. GTP-binding positions include 162–165 (NKAD) and 216–224 (GQSGVGKSS). Residues Cys298, Cys303, His305, and Cys311 each coordinate Zn(2+).

The protein belongs to the TRAFAC class YlqF/YawG GTPase family. RsgA subfamily. In terms of assembly, monomer. Associates with 30S ribosomal subunit, binds 16S rRNA. Zn(2+) is required as a cofactor.

It is found in the cytoplasm. One of several proteins that assist in the late maturation steps of the functional core of the 30S ribosomal subunit. Helps release RbfA from mature subunits. May play a role in the assembly of ribosomal proteins into the subunit. Circularly permuted GTPase that catalyzes slow GTP hydrolysis, GTPase activity is stimulated by the 30S ribosomal subunit. The polypeptide is Small ribosomal subunit biogenesis GTPase RsgA (Histophilus somni (strain 2336) (Haemophilus somnus)).